The chain runs to 302 residues: GrpE protein homolog 1, mitochondrial (302 aa).

The N-terminal 39 residues, 1–39 (MLVSRVLSRVSRSAGLRSSFSSVVTPKRNQIPIVASRFH), are a transit peptide targeting the mitochondrion. The disordered stretch occupies residues 77 to 97 (SAEPKGNESNTEVPKTGETSE).

This sequence belongs to the GrpE family. Probable component of the PAM complex, at least composed of SSC1 (mtHsp70), MGE1, TIM44, PAM16/TIM16, PAM17 and PAM18/TIM14. Interacts with SSQ1.

It localises to the mitochondrion matrix. Its function is as follows. Essential component of the PAM complex, a complex required for the translocation of transit peptide-containing proteins from the inner membrane into the mitochondrial matrix in an ATP-dependent manner. Seems to control the nucleotide-dependent binding of mitochondrial HSP70 to substrate proteins. Binds ATP. Interacts with copper ions Cu(2+). This Arabidopsis thaliana (Mouse-ear cress) protein is GrpE protein homolog 1, mitochondrial.